Reading from the N-terminus, the 39-residue chain is Large ribosomal subunit protein bL12 (39 aa).

It belongs to the bacterial ribosomal protein bL12 family. As to quaternary structure, homodimer. Part of the ribosomal stalk of the 50S ribosomal subunit. Forms a multimeric L10(L12)X complex, where L10 forms an elongated spine to which 2 to 4 L12 dimers bind in a sequential fashion. Binds GTP-bound translation factors.

Its function is as follows. Forms part of the ribosomal stalk which helps the ribosome interact with GTP-bound translation factors. Is thus essential for accurate translation. This is Large ribosomal subunit protein bL12 (rplL) from Arthrobacter glacialis.